A 386-amino-acid chain; its full sequence is Chaperone protein DnaJ (386 aa).

A J domain is found at 5–70 (DYYEVLGVER…QKRAAYDRYG (66 aa)). The segment at 138 to 216 (GKDETIHVPQ…CGGHGQVKEE (79 aa)) adopts a CR-type zinc-finger fold. Cys151, Cys154, Cys168, Cys171, Cys190, Cys193, Cys204, and Cys207 together coordinate Zn(2+). CXXCXGXG motif repeat units follow at residues 151 to 158 (CRPCEGTG), 168 to 175 (CETCGGHG), 190 to 197 (CHICQGRG), and 204 to 211 (CKTCGGHG).

Belongs to the DnaJ family. As to quaternary structure, homodimer. Requires Zn(2+) as cofactor.

It localises to the cytoplasm. Participates actively in the response to hyperosmotic and heat shock by preventing the aggregation of stress-denatured proteins and by disaggregating proteins, also in an autonomous, DnaK-independent fashion. Unfolded proteins bind initially to DnaJ; upon interaction with the DnaJ-bound protein, DnaK hydrolyzes its bound ATP, resulting in the formation of a stable complex. GrpE releases ADP from DnaK; ATP binding to DnaK triggers the release of the substrate protein, thus completing the reaction cycle. Several rounds of ATP-dependent interactions between DnaJ, DnaK and GrpE are required for fully efficient folding. Also involved, together with DnaK and GrpE, in the DNA replication of plasmids through activation of initiation proteins. This Hyphomonas neptunium (strain ATCC 15444) protein is Chaperone protein DnaJ.